The sequence spans 105 residues: Large ribosomal subunit protein eL36 (105 aa).

This sequence belongs to the eukaryotic ribosomal protein eL36 family. As to quaternary structure, component of the large ribosomal subunit.

The protein localises to the cytoplasm. It is found in the cytosol. Functionally, component of the large ribosomal subunit. The ribosome is a large ribonucleoprotein complex responsible for the synthesis of proteins in the cell. In Gallus gallus (Chicken), this protein is Large ribosomal subunit protein eL36 (RPL36).